We begin with the raw amino-acid sequence, 275 residues long: Methylglyoxal reductase DkgA (275 aa).

The Proton donor role is filled by Tyr51. His107 is a binding site for substrate. Ser187 to Asn241 provides a ligand contact to NADP(+).

This sequence belongs to the aldo/keto reductase family. As to quaternary structure, monomer.

The protein localises to the cytoplasm. It carries out the reaction hydroxyacetone + NADP(+) = methylglyoxal + NADPH + H(+). The catalysed reaction is a primary alcohol + NADP(+) = an aldehyde + NADPH + H(+). It catalyses the reaction 2-dehydro-L-idonate + NADP(+) = 2,5-didehydro-D-gluconate + NADPH + H(+). In terms of biological role, aldo-keto reductase that significantly contributes to cellular methylglyoxal detoxification by catalyzing the NADPH-dependent conversion of methylglyoxal to acetol. It also exhibits fairly high activity with glyoxal. Shows broad specificity and can use aromatic aldehydes such as 4-nitrobenzaldehyde, 3-nitrobenzaldehyde and benzaldehyde, and phenylglyoxal. Shows beta-keto ester reductase activity toward ethyl acetoacetate and a variety of 2-substituted derivatives. Also catalyzes the reduction of 2,5-diketo-D-gluconic acid (25DKG) to 2-keto-L-gulonic acid (2KLG) and could be involved in ketogluconate metabolism. However, the specific activity of the enzyme toward 2,5-diketo-D-gluconate was reported to be almost 400-fold lower than its activity toward methylglyoxal. Can catalyze in vitro the NADPH-dependent reduction of furfural, a natural product of lignocellulosic decomposition, to the less toxic product, furfuryl alcohol. However, it is unlikely that furfural is a physiological substrate. The sequence is that of Methylglyoxal reductase DkgA from Escherichia coli (strain K12).